Here is a 445-residue protein sequence, read N- to C-terminus: Neuropeptide Y receptor type 5 (445 aa).

Topologically, residues 1-42 are extracellular; sequence MEFKLEEHFNKTFVTENNTAAARNAAFPAWEDYRGSVDDLQY. N-linked (GlcNAc...) asparagine glycans are attached at residues Asn-10 and Asn-17. Residues 43 to 63 form a helical membrane-spanning segment; it reads FLIGLYTFVSLLGFMGNLLIL. Topologically, residues 64–77 are cytoplasmic; the sequence is MAVMKKRNQKTTVN. The chain crosses the membrane as a helical span at residues 78–98; it reads FLIGNLAFSDILVVLFCSPFT. At 99–117 the chain is on the extracellular side; the sequence is LTSVLLDQWMFGKAMCHIM. An intrachain disulfide couples Cys-114 to Cys-198. The helical transmembrane segment at 118–138 threads the bilayer; that stretch reads PFLQCVSVLVSTLILISIAIV. The Cytoplasmic segment spans residues 139 to 156; sequence RYHMIKHPISNNLTANHG. A helical transmembrane segment spans residues 157-177; the sequence is YFLIATVWTLGFAICSPLPVF. The Extracellular portion of the chain corresponds to 178–208; the sequence is HSLVELKETFGSALLSSKYLCVESWPSDSYR. The helical transmembrane segment at 209-229 threads the bilayer; it reads IAFTISLLLVQYILPLVCLTV. The Cytoplasmic segment spans residues 230 to 368; it reads SHTSVCRSIS…KKRSRSVFYR (139 aa). A helical transmembrane segment spans residues 369–389; the sequence is LTILILVFAVSWMPLHVFHVV. The Extracellular segment spans residues 390-406; that stretch reads TDFNDNLISNRHFKLVY. The helical transmembrane segment at 407–427 threads the bilayer; the sequence is CICHLLGMMSCCLNPILYGFL. Topologically, residues 428 to 445 are cytoplasmic; that stretch reads NNGIKADLRALIHCLHMS. Cys-441 carries the S-palmitoyl cysteine lipid modification.

It belongs to the G-protein coupled receptor 1 family. As to expression, brain; hypothalamus.

The protein resides in the cell membrane. In terms of biological role, receptor for neuropeptide Y and peptide YY. The activity of this receptor is mediated by G proteins that inhibit adenylate cyclase activity. Seems to be associated with food intake. Could be involved in feeding disorders. This is Neuropeptide Y receptor type 5 (Npy5r) from Rattus norvegicus (Rat).